Consider the following 914-residue polypeptide: Dynamin-2A (914 aa).

Met1 bears the N-acetylmethionine mark. Residues 35-303 (PATFLNVVAL…IRSRMKLRLP (269 aa)) form the Dynamin-type G domain. Residues 45–52 (GNVGAGKS) are G1 motif. 45-52 (GNVGAGKS) contacts GTP. Positions 71–73 (ATR) are G2 motif. Residues 143-146 (DLPG) are G3 motif. GTP is bound by residues 143–147 (DLPGL) and 204–207 (GKID). The interval 204–207 (GKID) is G4 motif. Positions 238–241 (AVIG) are G5 motif. Residues 507 to 522 (RREEELKGRSSKKGQD) are compositionally biased toward basic and acidic residues. Disordered regions lie at residues 507 to 570 (RREE…TAGP) and 629 to 648 (PEDE…NGPD). A compositionally biased stretch (polar residues) spans 523-535 (AEQSLLSRATSPQ). Basic and acidic residues-rich tracts occupy residues 547–560 (SMKD…KETP) and 634–645 (EKSKSSKDKKAN). The PH domain occupies 572-696 (GEITAGYLMK…WINKLQKVIQ (125 aa)). In terms of domain architecture, GED spans 730–823 (LRWMSQEVRG…QLSIHDNRAA (94 aa)). Residues 781–805 (NERIESLIQEDQNVKRRRERYQKQS) adopt a coiled-coil conformation. Residues 821–914 (RAAAASSYSD…PPPTGSAYRY (94 aa)) are disordered. Composition is skewed to polar residues over residues 826 to 839 (SSYS…SSPR) and 852 to 866 (AFNS…SLSK).

It belongs to the TRAFAC class dynamin-like GTPase superfamily. Dynamin/Fzo/YdjA family. In terms of assembly, binds PtdIns3P. Interacts with SH3P3 (via SH3 domain) and (via C-terminus) with GAMMA-ADR. May homooligomerize or heterooligomerize.

The protein resides in the cytoplasm. The protein localises to the cytosol. It is found in the golgi apparatus membrane. It localises to the cytoskeleton. Its subcellular location is the phragmoplast. The protein resides in the cytoplasmic vesicle. The protein localises to the clathrin-coated vesicle. It carries out the reaction GTP + H2O = GDP + phosphate + H(+). With respect to regulation, increased GTPase activity in the presence of phosphatidic acid. Its function is as follows. Microtubule-associated force-producing protein involved in clathrin-mediated vesicle trafficking from the trans-Golgi network to the central vacuole. Able to bind and hydrolyze GTP. Binds specifically to phosphatidylinositol 3-phosphate (PtdIns3P). The polypeptide is Dynamin-2A (DRP2A) (Arabidopsis thaliana (Mouse-ear cress)).